The following is a 44-amino-acid chain: Defensin ARD1 (44 aa).

Intrachain disulfides connect Cys-7-Cys-32, Cys-18-Cys-40, and Cys-22-Cys-42.

The protein localises to the secreted. Its function is as follows. Possesses potent anti-fungal activity. The polypeptide is Defensin ARD1 (Archaeoprepona demophon (One-spotted leafwing butterfly)).